The chain runs to 153 residues: Transthyretin (153 aa).

Positions 1–19 (MASFKSFLLLALLAIVSEA) are cleaved as a signal peptide. Sulfocysteine is present on C34. L-thyroxine is bound by residues K39 and E78. Residue N81 is glycosylated (N-linked (GlcNAc...) asparagine). S141 lines the L-thyroxine pocket.

Belongs to the transthyretin family. Homotetramer. Dimer of dimers. In the homotetramer, subunits assemble around a central channel that can accommodate two ligand molecules. Interacts with rbp4. Sulfonation of the reactive cysteine Cys-34 enhances the stability of the native conformation of TTR, avoiding misassembly of the protein leading to amyloid formation. Detected in plasma (at protein level). Expressed during metamorphosis in tadpole liver, but not in tadpole brain nor adult liver. Between 1.5 and 3 days of development, also expressed in the mesoderm of the kidney.

The protein localises to the secreted. Its function is as follows. Thyroid hormone-binding protein, with a much higher binding affinity for triiodothyronine (T3) than for thyroxine (T4). Probably transports triiodothyronine from the bloodstream to the brain. The protein is Transthyretin (ttr) of Xenopus laevis (African clawed frog).